We begin with the raw amino-acid sequence, 287 residues long: Protease HtpX (287 aa).

2 consecutive transmembrane segments (helical) span residues 4–24 (IFLLIATNLAVLLVASIVMSI) and 33–53 (GGLLVFAAIFGFGGAFISLAI). Histidine 139 is a binding site for Zn(2+). The active site involves glutamate 140. Histidine 143 provides a ligand contact to Zn(2+). 2 helical membrane-spanning segments follow: residues 154–174 (LIQGVVNTFVIFAARVVAGII) and 195–215 (AVVFVLDMLFGILASIIVAYF). Glutamate 220 contacts Zn(2+).

It belongs to the peptidase M48B family. Zn(2+) is required as a cofactor.

The protein localises to the cell inner membrane. The protein is Protease HtpX of Shewanella sp. (strain MR-4).